We begin with the raw amino-acid sequence, 406 residues long: Acetate kinase (406 aa).

Asn10 provides a ligand contact to Mg(2+). ATP is bound at residue Lys17. Arg92 contributes to the substrate binding site. Residue Asp151 is the Proton donor/acceptor of the active site. Residues 211-215 (HLGSG), 286-288 (DFR), and 335-339 (GIGEN) each bind ATP. Glu389 contacts Mg(2+).

The protein belongs to the acetokinase family. As to quaternary structure, homodimer. Mg(2+) serves as cofactor. Mn(2+) is required as a cofactor.

It localises to the cytoplasm. It catalyses the reaction acetate + ATP = acetyl phosphate + ADP. Its pathway is metabolic intermediate biosynthesis; acetyl-CoA biosynthesis; acetyl-CoA from acetate: step 1/2. In terms of biological role, catalyzes the formation of acetyl phosphate from acetate and ATP. Can also catalyze the reverse reaction. The chain is Acetate kinase from Buchnera aphidicola subsp. Cinara cedri (strain Cc).